The primary structure comprises 278 residues: Urease accessory protein UreD (278 aa).

It belongs to the UreD family. As to quaternary structure, ureD, UreF and UreG form a complex that acts as a GTP-hydrolysis-dependent molecular chaperone, activating the urease apoprotein by helping to assemble the nickel containing metallocenter of UreC. The UreE protein probably delivers the nickel.

The protein localises to the cytoplasm. Functionally, required for maturation of urease via the functional incorporation of the urease nickel metallocenter. The chain is Urease accessory protein UreD from Blochmanniella pennsylvanica (strain BPEN).